Here is a 476-residue protein sequence, read N- to C-terminus: Glucose-1-phosphate adenylyltransferase (476 aa).

Residues tyrosine 114, glycine 179, 194 to 195, and serine 212 contribute to the alpha-D-glucose 1-phosphate site; that span reads EK.

Belongs to the bacterial/plant glucose-1-phosphate adenylyltransferase family. In terms of assembly, homotetramer.

It carries out the reaction alpha-D-glucose 1-phosphate + ATP + H(+) = ADP-alpha-D-glucose + diphosphate. It functions in the pathway glycan biosynthesis; glycogen biosynthesis. Its function is as follows. Involved in the biosynthesis of ADP-glucose, a building block required for the elongation reactions to produce glycogen. Catalyzes the reaction between ATP and alpha-D-glucose 1-phosphate (G1P) to produce pyrophosphate and ADP-Glc. The chain is Glucose-1-phosphate adenylyltransferase from Yersinia pestis.